Consider the following 465-residue polypeptide: Probable zinc metalloprotease PTT_17836 (465 aa).

An N-terminal signal peptide occupies residues 1–20 (MRSASTLAVCAATLLQIACS). An N-linked (GlcNAc...) asparagine glycan is attached at N140. Zn(2+) is bound by residues H163, D183, and E216. The N-linked (GlcNAc...) asparagine glycan is linked to N231. D243 contacts Zn(2+). N-linked (GlcNAc...) asparagine glycans are attached at residues N272, N330, N378, N384, N421, and N426. Positions 371–464 (APTNVGVNTT…LPFPFGCARN (94 aa)) constitute a Fibronectin type-III domain.

The protein belongs to the peptidase M28 family. M28B subfamily. It depends on Zn(2+) as a cofactor.

It is found in the secreted. This chain is Probable zinc metalloprotease PTT_17836, found in Pyrenophora teres f. teres (strain 0-1) (Barley net blotch fungus).